The following is a 189-amino-acid chain: Thermostable direct hemolysin-related (189 aa).

The first 24 residues, 1–24, serve as a signal peptide directing secretion; it reads MKYRYFAKKSFLFISMLAAFKTFA. The cysteines at positions 175 and 185 are disulfide-linked.

Belongs to the TDH hemolysin family. Homodimer.

Functionally, bacterial hemolysins are exotoxins that attack blood cell membranes and cause cell rupture by mechanisms not clearly defined. The polypeptide is Thermostable direct hemolysin-related (tdh3) (Vibrio parahaemolyticus).